The primary structure comprises 283 residues: ATP synthase gamma chain (283 aa).

This sequence belongs to the ATPase gamma chain family. As to quaternary structure, F-type ATPases have 2 components, CF(1) - the catalytic core - and CF(0) - the membrane proton channel. CF(1) has five subunits: alpha(3), beta(3), gamma(1), delta(1), epsilon(1). CF(0) has three main subunits: a, b and c.

It is found in the cell membrane. In terms of biological role, produces ATP from ADP in the presence of a proton gradient across the membrane. The gamma chain is believed to be important in regulating ATPase activity and the flow of protons through the CF(0) complex. The polypeptide is ATP synthase gamma chain (Exiguobacterium sibiricum (strain DSM 17290 / CCUG 55495 / CIP 109462 / JCM 13490 / 255-15)).